We begin with the raw amino-acid sequence, 456 residues long: Bifunctional protein GlmU (456 aa).

A pyrophosphorylase region spans residues 1–229; it reads MLNNAMSVVI…LSEVEGVNNR (229 aa). UDP-N-acetyl-alpha-D-glucosamine-binding positions include 11–14, Lys25, Gln76, 81–82, 103–105, Gly140, Glu154, Asn169, and Asn227; these read LAAG, GT, and YGD. Position 105 (Asp105) interacts with Mg(2+). A Mg(2+)-binding site is contributed by Asn227. The segment at 230–250 is linker; it reads LQLSRLERVYQSEQAEKLLLA. The tract at residues 251 to 456 is N-acetyltransferase; sequence GVMLRDPARF…EGWRRPVKKK (206 aa). Arg333 and Lys351 together coordinate UDP-N-acetyl-alpha-D-glucosamine. His363 functions as the Proton acceptor in the catalytic mechanism. Residues Tyr366 and Asn377 each contribute to the UDP-N-acetyl-alpha-D-glucosamine site. Acetyl-CoA is bound by residues Ala380, 386-387, Ser405, Ala423, and Arg440; that span reads NY.

It in the N-terminal section; belongs to the N-acetylglucosamine-1-phosphate uridyltransferase family. The protein in the C-terminal section; belongs to the transferase hexapeptide repeat family. In terms of assembly, homotrimer. Mg(2+) is required as a cofactor.

The protein resides in the cytoplasm. It catalyses the reaction alpha-D-glucosamine 1-phosphate + acetyl-CoA = N-acetyl-alpha-D-glucosamine 1-phosphate + CoA + H(+). It carries out the reaction N-acetyl-alpha-D-glucosamine 1-phosphate + UTP + H(+) = UDP-N-acetyl-alpha-D-glucosamine + diphosphate. Its pathway is nucleotide-sugar biosynthesis; UDP-N-acetyl-alpha-D-glucosamine biosynthesis; N-acetyl-alpha-D-glucosamine 1-phosphate from alpha-D-glucosamine 6-phosphate (route II): step 2/2. It functions in the pathway nucleotide-sugar biosynthesis; UDP-N-acetyl-alpha-D-glucosamine biosynthesis; UDP-N-acetyl-alpha-D-glucosamine from N-acetyl-alpha-D-glucosamine 1-phosphate: step 1/1. It participates in bacterial outer membrane biogenesis; LPS lipid A biosynthesis. In terms of biological role, catalyzes the last two sequential reactions in the de novo biosynthetic pathway for UDP-N-acetylglucosamine (UDP-GlcNAc). The C-terminal domain catalyzes the transfer of acetyl group from acetyl coenzyme A to glucosamine-1-phosphate (GlcN-1-P) to produce N-acetylglucosamine-1-phosphate (GlcNAc-1-P), which is converted into UDP-GlcNAc by the transfer of uridine 5-monophosphate (from uridine 5-triphosphate), a reaction catalyzed by the N-terminal domain. The polypeptide is Bifunctional protein GlmU (Escherichia coli O81 (strain ED1a)).